Reading from the N-terminus, the 62-residue chain is Photosystem II reaction center protein Z (62 aa).

2 helical membrane passes run 8-28 and 41-61; these read LIAAFVALSFAMIIGVPVVFS and WGGAAAWVVLLFVAALASIVV.

Belongs to the PsbZ family. PSII is composed of 1 copy each of membrane proteins PsbA, PsbB, PsbC, PsbD, PsbE, PsbF, PsbH, PsbI, PsbJ, PsbK, PsbL, PsbM, PsbT, PsbX, PsbY, PsbZ, Psb30/Ycf12, peripheral proteins PsbO, CyanoQ (PsbQ), PsbU, PsbV and a large number of cofactors. It forms dimeric complexes.

Its subcellular location is the cellular thylakoid membrane. Functionally, may control the interaction of photosystem II (PSII) cores with the light-harvesting antenna, regulates electron flow through the 2 photosystem reaction centers. PSII is a light-driven water plastoquinone oxidoreductase, using light energy to abstract electrons from H(2)O, generating a proton gradient subsequently used for ATP formation. This is Photosystem II reaction center protein Z from Acaryochloris marina (strain MBIC 11017).